The sequence spans 75 residues: Antimicrobial peptide ctriporin (75 aa).

A signal peptide spans Met1–Gly22. The residue at position 41 (Lys41) is a Lysine amide. Positions Glu47–Tyr75 are excised as a propeptide.

This sequence belongs to the non-disulfide-bridged peptide (NDBP) superfamily. Short antimicrobial peptide (group 4) family. As to expression, expressed by the venom gland.

It is found in the secreted. The protein resides in the target cell membrane. In terms of biological role, antimicrobial peptide that acts by breaking the cell wall. Is active against Gram-positive bacteria, fungi and antibiotic-resistant pathogens: S.aureus (MIC=5 ug/ml), M.luteus (MIC=5 ug/ml), B.thuringiensis (MIC=10 ug/ml), B.subtilis (MIC=10 ug/ml), C.albicans (MIC=20 ug/ml), methicillin-resistant S.aureus (MIC=5-10 ug/ml), and penicillin-resistant S.epidermidis (MIC=10 ug/ml). Also shows potent activity against antibiotic-sensitive and -resistant Acinetobacter baumannii (MIC=10-20 uM). Shows cytolytic activity against human erythrocytes. In vivo, is efficient in curing staphylococcal skin infection in mice, when externally applied. The polypeptide is Antimicrobial peptide ctriporin (Chaerilus tricostatus (Scorpion)).